Consider the following 304-residue polypeptide: E3 ubiquitin-protein ligase CCNB1IP1 homolog (304 aa).

The segment at 3–42 (CNACWRDLEGRAISTTCGHLLCTEDASKILSNDGACPICD) adopts an RING-type; degenerate zinc-finger fold. Residues 124–184 (TAYQKMGKRC…YESVKRTAIQ (61 aa)) adopt a coiled-coil conformation. A disordered region spans residues 218–279 (SFFSPATPGP…GGGGTANPQS (62 aa)). Polar residues predominate over residues 235-250 (RQNSSNSGPFDISTDS).

Expressed mostly in flower buds and roots.

The protein localises to the nucleus. Its subcellular location is the chromosome. It catalyses the reaction S-ubiquitinyl-[E2 ubiquitin-conjugating enzyme]-L-cysteine + [acceptor protein]-L-lysine = [E2 ubiquitin-conjugating enzyme]-L-cysteine + N(6)-ubiquitinyl-[acceptor protein]-L-lysine.. Its pathway is protein modification; protein ubiquitination. Ubiquitin E3 ligase required for class I crossover (CO) formation during meiosis. The protein is E3 ubiquitin-protein ligase CCNB1IP1 homolog (HEI10) of Arabidopsis thaliana (Mouse-ear cress).